The chain runs to 246 residues: 33kDa venom protein (246 aa).

A signal peptide spans 1–20; the sequence is MAGKEVIFIMALFIAVESSP. 7 repeat units span residues 83–96, 97–110, 111–124, 125–138, 139–152, 153–166, and 167–180. The tract at residues 83–243 is 12 X approximate tandem repeats of [AV][DE]X[VL]SGSX[DE]QX[KR]X[ST]; the sequence is GGAVSESVKQ…SGSVGNDDDI (161 aa). The tract at residues 88–246 is disordered; it reads ESVKQKRETA…VGNDDDISVQ (159 aa). Over residues 112–123 the composition is skewed to polar residues; the sequence is ENLSGSFDQQKS. Over residues 175–186 the composition is skewed to basic and acidic residues; sequence DKQKVTVEEKSE. The 8; half-length repeat unit spans residues 181-187; the sequence is VEEKSEP. Tandem repeats lie at residues 188-201, 202-215, 216-229, and 230-243. A compositionally biased stretch (polar residues) spans 217 to 228; that stretch reads ESLSGSFDQQKS.

In terms of tissue distribution, expressed by the venom gland.

The protein localises to the secreted. This Chelonus sp. nr. curvimaculatus (Parasitic wasp) protein is 33kDa venom protein.